Consider the following 379-residue polypeptide: Dual-specificity RNA methyltransferase RlmN (379 aa).

The active-site Proton acceptor is Glu97. Residues 103 to 343 (QGGRGTLCVS…VRTTRGDDID (241 aa)) form the Radical SAM core domain. A disulfide bond links Cys110 and Cys346. Positions 117, 121, and 124 each coordinate [4Fe-4S] cluster. S-adenosyl-L-methionine is bound by residues 171 to 172 (GE), Ser203, 225 to 227 (SLH), and Asn303. The active-site S-methylcysteine intermediate is Cys346.

Belongs to the radical SAM superfamily. RlmN family. The cofactor is [4Fe-4S] cluster.

The protein localises to the cytoplasm. It catalyses the reaction adenosine(2503) in 23S rRNA + 2 reduced [2Fe-2S]-[ferredoxin] + 2 S-adenosyl-L-methionine = 2-methyladenosine(2503) in 23S rRNA + 5'-deoxyadenosine + L-methionine + 2 oxidized [2Fe-2S]-[ferredoxin] + S-adenosyl-L-homocysteine. The catalysed reaction is adenosine(37) in tRNA + 2 reduced [2Fe-2S]-[ferredoxin] + 2 S-adenosyl-L-methionine = 2-methyladenosine(37) in tRNA + 5'-deoxyadenosine + L-methionine + 2 oxidized [2Fe-2S]-[ferredoxin] + S-adenosyl-L-homocysteine. Its function is as follows. Specifically methylates position 2 of adenine 2503 in 23S rRNA and position 2 of adenine 37 in tRNAs. m2A2503 modification seems to play a crucial role in the proofreading step occurring at the peptidyl transferase center and thus would serve to optimize ribosomal fidelity. The sequence is that of Dual-specificity RNA methyltransferase RlmN from Pseudomonas aeruginosa (strain ATCC 15692 / DSM 22644 / CIP 104116 / JCM 14847 / LMG 12228 / 1C / PRS 101 / PAO1).